Here is a 294-residue protein sequence, read N- to C-terminus: Tetraspanin-15 (294 aa).

The Cytoplasmic segment spans residues 1–23; sequence MPRGDSEQVRYCARFSYLWLKFS. The helical transmembrane segment at 24-44 threads the bilayer; the sequence is LVIYSTVFWLIGGLVLSVGIY. The Extracellular segment spans residues 45 to 62; that stretch reads AEVERQKYKTLESAFLAP. A helical transmembrane segment spans residues 63–83; that stretch reads AIILILLGVVMFIVSFIGVLA. At 84-93 the chain is on the cytoplasmic side; that stretch reads SLRDNLCLLQ. The chain crosses the membrane as a helical span at residues 94-114; that stretch reads AFMYILGICLIIELIGGVVAL. Residues 115–235 are Extracellular-facing; sequence IFRNQTIDFL…WFTDNYTIMA (121 aa). N118 is a glycosylation site (N-linked (GlcNAc...) asparagine). Intrachain disulfides connect C154/C219, C155/C185, C171/C179, and C186/C198. N-linked (GlcNAc...) asparagine glycans are attached at residues N189 and N230. Residues 236 to 256 form a helical membrane-spanning segment; the sequence is GVLLGILLPQFLGVLLTFLYI. The Cytoplasmic segment spans residues 257–294; sequence TRVEDIITEHSVTDGLLGPGTKAGVEAAGTGCCMCYPI.

This sequence belongs to the tetraspanin (TM4SF) family. Interacts with ADAM10; the interaction influences ADAM10 substrate specificity, endocytosis and turnover. In terms of processing, palmitoylated.

It localises to the cell membrane. The protein resides in the late endosome membrane. In terms of biological role, part of TspanC8 subgroup, composed of 6 members that interact with the transmembrane metalloprotease ADAM10. This interaction is required for ADAM10 exit from the endoplasmic reticulum and for enzymatic maturation and trafficking to the cell surface as well as substrate specificity. Different TspanC8/ADAM10 complexes have distinct substrates. Promotes ADAM10-mediated cleavage of CDH2. Negatively regulates ligand-induced Notch activity probably by regulating ADAM10 activity. This chain is Tetraspanin-15 (TSPAN15), found in Bos taurus (Bovine).